The chain runs to 82 residues: UPF0410 protein YeaQ (82 aa).

Helical transmembrane passes span 26–46 (GGGF…GGWI) and 57–77 (GFNF…LFIY).

This sequence belongs to the UPF0410 family.

It localises to the cell inner membrane. This is UPF0410 protein YeaQ (yeaQ) from Escherichia coli O157:H7.